The primary structure comprises 311 residues: Methionyl-tRNA formyltransferase (311 aa).

Residue 110 to 113 (SLLP) participates in (6S)-5,6,7,8-tetrahydrofolate binding.

This sequence belongs to the Fmt family.

It carries out the reaction L-methionyl-tRNA(fMet) + (6R)-10-formyltetrahydrofolate = N-formyl-L-methionyl-tRNA(fMet) + (6S)-5,6,7,8-tetrahydrofolate + H(+). In terms of biological role, attaches a formyl group to the free amino group of methionyl-tRNA(fMet). The formyl group appears to play a dual role in the initiator identity of N-formylmethionyl-tRNA by promoting its recognition by IF2 and preventing the misappropriation of this tRNA by the elongation apparatus. The polypeptide is Methionyl-tRNA formyltransferase (Streptococcus pyogenes serotype M18 (strain MGAS8232)).